We begin with the raw amino-acid sequence, 338 residues long: Ferrochelatase (338 aa).

Residues His-189 and Glu-293 each coordinate Fe cation.

It belongs to the ferrochelatase family.

It is found in the cytoplasm. The enzyme catalyses heme b + 2 H(+) = protoporphyrin IX + Fe(2+). The protein operates within porphyrin-containing compound metabolism; protoheme biosynthesis; protoheme from protoporphyrin-IX: step 1/1. Functionally, catalyzes the ferrous insertion into protoporphyrin IX. In Azotobacter vinelandii (strain DJ / ATCC BAA-1303), this protein is Ferrochelatase.